The sequence spans 378 residues: Sphingosine 1-phosphate receptor 3 (378 aa).

Over 1-44 (MATTHAQGHQPVLGNDTLREHYDYVGKLAGRLRDPPEGGTLITT) the chain is Extracellular. Asparagine 15 carries N-linked (GlcNAc...) asparagine glycosylation. The chain crosses the membrane as a helical span at residues 45-65 (ILFLVTCSFIVLENLMVLIAI). At 66-74 (WKNNKFHNR) the chain is on the cytoplasmic side. Residues 75-95 (MYFFIGNLALCDLLAGIAYKV) form a helical membrane-spanning segment. At 96–115 (NILMSGRKTFSLSPTVWFLR) the chain is on the extracellular side. Residues 116-136 (EGSMFVALGASTCSLLAIAIE) form a helical membrane-spanning segment. At 137–154 (RHLTMIKMRPYDANKKHR) the chain is on the cytoplasmic side. The helical transmembrane segment at 155 to 175 (VFLLIGMCWLIAFSLGALPIL) threads the bilayer. At 176-196 (GWNCLENFPDCSTILPLYSKK) the chain is on the extracellular side. A helical membrane pass occupies residues 197 to 217 (YIAFLISIFTAILVTIVILYA). The Cytoplasmic portion of the chain corresponds to 218–244 (RIYCLVKSSSRRVANHNSERSMALLRT). A helical membrane pass occupies residues 245–265 (VVIVVSVFIACWSPLFILFLI). Over 266-281 (DVACRAKECSILFKSQ) the chain is Extracellular. The chain crosses the membrane as a helical span at residues 282 to 302 (WFIMLAVLNSAMNPVIYTLAS). Residues 303-378 (KEMRRAFFRL…RSFQNGVLCK (76 aa)) are Cytoplasmic-facing. Positions 323–354 (TQASPMQPALDPSRSKSSSSNNSSHSPKVKED) are disordered. A Phosphoserine modification is found at serine 326. The span at 337-348 (SKSSSSNNSSHS) shows a compositional bias: low complexity.

This sequence belongs to the G-protein coupled receptor 1 family. Most abundant in heart, lung, kidney and spleen; low but detectable in brain, thymus, muscle and testis; and nearly undetectable in liver, stomach, and intestine. Expressed in embryonic lung from embryonic day 14-18. Also abundantly detected in embryonic nasal cartilage, sphenoid bone, vena cava, Meckel's cartilage/incisor teeth, genital tubercle and bladder.

The protein resides in the cell membrane. Receptor for the lysosphingolipid sphingosine 1-phosphate (S1P). S1P is a bioactive lysophospholipid that elicits diverse physiological effect on most types of cells and tissues. The protein is Sphingosine 1-phosphate receptor 3 (S1pr3) of Mus musculus (Mouse).